A 467-amino-acid polypeptide reads, in one-letter code: Dimethylamine methyltransferase MtbB3 (467 aa).

Residue O356 is a non-standard amino acid, pyrrolysine.

This sequence belongs to the dimethylamine methyltransferase family.

It carries out the reaction Co(I)-[dimethylamine-specific corrinoid protein] + dimethylamine + H(+) = methyl-Co(III)-[dimethylamine-specific corrinoid protein] + methylamine. It functions in the pathway one-carbon metabolism; methanogenesis from dimethylamine. Catalyzes the transfer of a methyl group from dimethylamine to the corrinoid cofactor of MtbC. This chain is Dimethylamine methyltransferase MtbB3 (mtbB3), found in Methanosarcina mazei (strain ATCC BAA-159 / DSM 3647 / Goe1 / Go1 / JCM 11833 / OCM 88) (Methanosarcina frisia).